Reading from the N-terminus, the 398-residue chain is ATP-dependent RNA helicase RhlB (398 aa).

The Q motif motif lies at 9–37; it reads TRFHDFKLSNELMHAIHDLGFPYCTPIQA. The Helicase ATP-binding domain maps to 40–220; sequence LGYTLRGQDA…KQWTTNPAIV (181 aa). 53 to 60 contacts ATP; the sequence is AQTGTGKT. A DEAD box motif is present at residues 166 to 169; that stretch reads DEAD. Residues 243–393 enclose the Helicase C-terminal domain; it reads DKYKLLYNLV…MPPDELLKPV (151 aa).

Belongs to the DEAD box helicase family. RhlB subfamily. As to quaternary structure, component of the RNA degradosome, which is a multiprotein complex involved in RNA processing and mRNA degradation.

Its subcellular location is the cytoplasm. It catalyses the reaction ATP + H2O = ADP + phosphate + H(+). Its function is as follows. DEAD-box RNA helicase involved in RNA degradation. Has RNA-dependent ATPase activity and unwinds double-stranded RNA. The sequence is that of ATP-dependent RNA helicase RhlB from Pseudomonas putida (strain ATCC 47054 / DSM 6125 / CFBP 8728 / NCIMB 11950 / KT2440).